A 278-amino-acid chain; its full sequence is RsbT co-antagonist protein RsbRD (278 aa).

One can recognise an STAS domain in the interval 160 to 271; sequence SAPIMPITDG…QSLAKALANK (112 aa). A Phosphothreonine modification is found at T181.

As to quaternary structure, probably present in the stressosome with RsbRA, RsbRB, RsbRC and RsbS. Post-translationally, phosphorylated by RsbT.

Functionally, one of 4 functionally non-identical RsbR paralogs, it functions in the environmental signaling branch of the general stress response. Its function is as follows. Negative regulator of sigma-B activity. Non-phosphorylated RsbS binds to RsbT, preventing its association with RsbU. Requires any one of RsbRA, RsbRB, RsbRC or RsbRD to sequester RsbT. When RsbS and the RsbR paralog(s) are phosphorylated, they release RsbT, which can then bind and activate RsbU. This is RsbT co-antagonist protein RsbRD (rsbRD) from Bacillus subtilis (strain 168).